Consider the following 31-residue polypeptide: Cycloviolacin-O25 (31 aa).

The segment at residues 1–31 is a cross-link (cyclopeptide (Asp-Asn)); that stretch reads DIFCGETCAFIPCITHVPGTCSCKSKVCYFN. 3 cysteine pairs are disulfide-bonded: Cys4-Cys21, Cys8-Cys23, and Cys13-Cys28.

In terms of processing, this is a cyclic peptide. As to expression, expressed in roots and runners but not in leaves, petals and petioles (at protein level).

Probably participates in a plant defense mechanism. The chain is Cycloviolacin-O25 from Viola odorata (Sweet violet).